A 198-amino-acid chain; its full sequence is MTTEKETATPADVEVASQEEQIDQTTEAQVEEPSIEAELAGCYAKIHELETYIAEADKREQDIQLRAQAEIQNIRRRTEQDIEKAHKFALEKFAKELLTVVDNLERGLVALDTAVTDEKTQALVDGVEMTHKEFVSTLAKFGIEAIGEIGDVFNPELHQAISMQPAENIEANHLSQVLQKGYTLQGRVIRPAMVMVAA.

Residues 1 to 32 (MTTEKETATPADVEVASQEEQIDQTTEAQVEE) are disordered.

This sequence belongs to the GrpE family. In terms of assembly, homodimer.

Its subcellular location is the cytoplasm. Participates actively in the response to hyperosmotic and heat shock by preventing the aggregation of stress-denatured proteins, in association with DnaK and GrpE. It is the nucleotide exchange factor for DnaK and may function as a thermosensor. Unfolded proteins bind initially to DnaJ; upon interaction with the DnaJ-bound protein, DnaK hydrolyzes its bound ATP, resulting in the formation of a stable complex. GrpE releases ADP from DnaK; ATP binding to DnaK triggers the release of the substrate protein, thus completing the reaction cycle. Several rounds of ATP-dependent interactions between DnaJ, DnaK and GrpE are required for fully efficient folding. The polypeptide is Protein GrpE (Haemophilus ducreyi (strain 35000HP / ATCC 700724)).